The chain runs to 136 residues: Peptide methionine sulfoxide reductase MsrB (136 aa).

A MsrB domain is found at 7-129 (SSSHENTLTE…NSASLSFTDD (123 aa)). Cys46, Cys49, Cys95, and Cys98 together coordinate Zn(2+). The Nucleophile role is filled by Cys118.

It belongs to the MsrB Met sulfoxide reductase family. It depends on Zn(2+) as a cofactor.

The catalysed reaction is L-methionyl-[protein] + [thioredoxin]-disulfide + H2O = L-methionyl-(R)-S-oxide-[protein] + [thioredoxin]-dithiol. The protein is Peptide methionine sulfoxide reductase MsrB of Erwinia tasmaniensis (strain DSM 17950 / CFBP 7177 / CIP 109463 / NCPPB 4357 / Et1/99).